Consider the following 336-residue polypeptide: HTH-type transcriptional repressor PurR (336 aa).

Residues 2-56 form the HTH lacI-type domain; sequence ATIKDVAKMAGVSTTTVSHVINKTRFVAKDTEEAVLSAIKQLNYSPSAVARSLKV. A DNA-binding region (H-T-H motif) is located at residues 4–23; that stretch reads IKDVAKMAGVSTTTVSHVIN. A DNA-binding region spans residues 48 to 56; the sequence is SAVARSLKV. Positions 73, 188, 190, 219, and 273 each coordinate hypoxanthine.

As to quaternary structure, homodimer.

It functions in the pathway purine metabolism; purine nucleotide biosynthesis [regulation]. In terms of biological role, is the main repressor of the genes involved in the de novo synthesis of purine nucleotides, regulating purB, purC, purEK, purF, purHD, purL, purMN and guaBA expression. PurR is allosterically activated to bind its cognate DNA by binding the purine corepressors, hypoxanthine or guanine, thereby effecting transcription repression. This Haemophilus influenzae (strain 86-028NP) protein is HTH-type transcriptional repressor PurR.